We begin with the raw amino-acid sequence, 158 residues long: Cytochrome b6-f complex subunit 4 (158 aa).

3 consecutive transmembrane segments (helical) span residues 34–54 (LLYI…GLAV), 93–113 (LLGV…PFLE), and 129–149 (TVFL…TLPI).

Belongs to the cytochrome b family. PetD subfamily. The 4 large subunits of the cytochrome b6-f complex are cytochrome b6, subunit IV (17 kDa polypeptide, petD), cytochrome f and the Rieske protein, while the 4 small subunits are petG, petL, petM and petN. The complex functions as a dimer.

The protein resides in the plastid. Its subcellular location is the chloroplast thylakoid membrane. Its function is as follows. Component of the cytochrome b6-f complex, which mediates electron transfer between photosystem II (PSII) and photosystem I (PSI), cyclic electron flow around PSI, and state transitions. This chain is Cytochrome b6-f complex subunit 4, found in Liriodendron tulipifera (Tuliptree).